Reading from the N-terminus, the 253-residue chain is 3-deoxy-manno-octulosonate cytidylyltransferase (253 aa).

It belongs to the KdsB family.

The protein resides in the cytoplasm. The catalysed reaction is 3-deoxy-alpha-D-manno-oct-2-ulosonate + CTP = CMP-3-deoxy-beta-D-manno-octulosonate + diphosphate. The protein operates within nucleotide-sugar biosynthesis; CMP-3-deoxy-D-manno-octulosonate biosynthesis; CMP-3-deoxy-D-manno-octulosonate from 3-deoxy-D-manno-octulosonate and CTP: step 1/1. It functions in the pathway bacterial outer membrane biogenesis; lipopolysaccharide biosynthesis. In terms of biological role, activates KDO (a required 8-carbon sugar) for incorporation into bacterial lipopolysaccharide in Gram-negative bacteria. This Acinetobacter baumannii (strain SDF) protein is 3-deoxy-manno-octulosonate cytidylyltransferase.